The chain runs to 813 residues: MSQDPFQEREAEKYANPIPSREFILEHLTKREKPASRDELAVELHIEGEEQLEGLRRRLRAMERDGQLVFTRRQCYALPERLDLVKGTVIGHRDGYGFLRVEGRKDDLYLSSEQMKTCIHGDQVLAQPLGADRKGRREARIVRVLVPKTSQIVGRYFTEAGVGFVVPDDSRLSFDILIPPDQIMGARMGFVVVVELTQRPTRRTKAVGKIVEVLGDNMGTGMAVDIALRTHEIPYIWPQAVEQQVAGLKEEVPEEAKAGRVDLRDLPLVTIDGEDARDFDDAVYCEKKRGGGWRLWVAIADVSYYVRPSTPLDREARNRGTSVYFPSQVIPMLPEVLSNGLCSLNPQVDRLCMVCEMTVSSKGRLTGYKFYEAVMSSHARLTYTKVWHILQGDQDLREQYAPLVKHLEELHNLYKVLDKAREERGGISFESEEAKFIFNAERRIERIEQTQRNDAHKLIEECMILANISAARFVEKAKEPALFRIHDKPSTEAITSFRSVLAELGLELPGGNKPEPRDYAELLESVADRPDAEMLQTMLLRSMKQAIYDPENRGHFGLALQSYAHFTSPIRRYPDLTLHRAIKYLLAKEQGHQGNTTETGGYHYSMEEMLQLGQHCSMAERRADEATRDVADWLKCDFMLDQVGNVFKGVISSVTGFGFFVRLDDLFIDGLVHVSSLDNDYYRFDQVGQRLMGESSGQTYRLGDRVEVRVEAVNMDERKIDFSLISSERAPRNVGKTAREKAKKGDAGKKGGKRRQVGKKVNFEPDSAFRGEKKTKPKAAKKDARKAKKPSAKTQKIAAATKAKRAAKKKVAE.

The RNB domain maps to 260-587; that stretch reads RVDLRDLPLV…LHRAIKYLLA (328 aa). An N6-acetyllysine; by PatZ modification is found at K544. Positions 644 to 725 constitute an S1 motif domain; the sequence is GNVFKGVISS…DERKIDFSLI (82 aa). Positions 731-813 are disordered; that stretch reads PRNVGKTARE…KRAAKKKVAE (83 aa). 2 stretches are compositionally biased toward basic and acidic residues: residues 737 to 749 and 761 to 774; these read TARE…DAGK and VNFE…GEKK. The segment covering 775 to 791 has biased composition (basic residues); the sequence is TKPKAAKKDARKAKKPS. Residues 792 to 801 are compositionally biased toward low complexity; sequence AKTQKIAAAT. A compositionally biased stretch (basic residues) spans 802–813; that stretch reads KAKRAAKKKVAE.

Belongs to the RNR ribonuclease family. RNase R subfamily. Monomer. Mg(2+) serves as cofactor. Acetylated at Lys-544 by PatZ during exponential growth phase. Acetylation alters RNase R structure and enhances binding of SsrA/tmRNA and SmpB, leading to instability and degradation of RNase R. Not acetylated and stable in stationary phase cells.

It localises to the cytoplasm. It catalyses the reaction Exonucleolytic cleavage in the 3'- to 5'-direction to yield nucleoside 5'-phosphates.. Stimulated by the presence of a monovalent cation. Highly unstable in exponential growth phase. This instability is due to the binding of SsrA/tmRNA and its associated protein SmpB to the C-terminal region of RNase R. In contrast, RNase R becomes stabilized upon entry into stationary phase. The difference in stability between exponential and stationary phase is due to the acetylation of a single lysine residue. Its function is as follows. 3'-5' exoribonuclease that releases 5'-nucleoside monophosphates and is involved in maturation of structured RNAs (rRNAs, tRNAs and SsrA/tmRNA). In stationary phase, involved in the post-transcriptional regulation of ompA mRNA stability. Shortens RNA processively to di- and trinucleotides. In vitro, exhibits helicase activity, which is independent of its RNase activity. RNases 2 and R (rnb and this entry) contribute to rRNA degradation during starvation, while RNase R and PNPase (this entry and pnp) are the major contributors to quality control of rRNA during steady state growth. Required for the expression of virulence genes in enteroinvasive strains of E.coli. The protein is Ribonuclease R (rnr) of Escherichia coli (strain K12).